The primary structure comprises 168 residues: Crossover junction endodeoxyribonuclease RuvC (168 aa).

Active-site residues include D8, E68, and D140. 3 residues coordinate Mg(2+): D8, E68, and D140.

This sequence belongs to the RuvC family. Homodimer which binds Holliday junction (HJ) DNA. The HJ becomes 2-fold symmetrical on binding to RuvC with unstacked arms; it has a different conformation from HJ DNA in complex with RuvA. In the full resolvosome a probable DNA-RuvA(4)-RuvB(12)-RuvC(2) complex forms which resolves the HJ. It depends on Mg(2+) as a cofactor.

Its subcellular location is the cytoplasm. It carries out the reaction Endonucleolytic cleavage at a junction such as a reciprocal single-stranded crossover between two homologous DNA duplexes (Holliday junction).. Its function is as follows. The RuvA-RuvB-RuvC complex processes Holliday junction (HJ) DNA during genetic recombination and DNA repair. Endonuclease that resolves HJ intermediates. Cleaves cruciform DNA by making single-stranded nicks across the HJ at symmetrical positions within the homologous arms, yielding a 5'-phosphate and a 3'-hydroxyl group; requires a central core of homology in the junction. The consensus cleavage sequence is 5'-(A/T)TT(C/G)-3'. Cleavage occurs on the 3'-side of the TT dinucleotide at the point of strand exchange. HJ branch migration catalyzed by RuvA-RuvB allows RuvC to scan DNA until it finds its consensus sequence, where it cleaves and resolves the cruciform DNA. This is Crossover junction endodeoxyribonuclease RuvC from Gluconacetobacter diazotrophicus (strain ATCC 49037 / DSM 5601 / CCUG 37298 / CIP 103539 / LMG 7603 / PAl5).